We begin with the raw amino-acid sequence, 218 residues long: Probable transaldolase (218 aa).

The active-site Schiff-base intermediate with substrate is lysine 83.

Belongs to the transaldolase family. Type 3B subfamily.

It localises to the cytoplasm. The enzyme catalyses D-sedoheptulose 7-phosphate + D-glyceraldehyde 3-phosphate = D-erythrose 4-phosphate + beta-D-fructose 6-phosphate. Its pathway is carbohydrate degradation; pentose phosphate pathway; D-glyceraldehyde 3-phosphate and beta-D-fructose 6-phosphate from D-ribose 5-phosphate and D-xylulose 5-phosphate (non-oxidative stage): step 2/3. Transaldolase is important for the balance of metabolites in the pentose-phosphate pathway. This chain is Probable transaldolase (tal), found in Mesorhizobium japonicum (strain LMG 29417 / CECT 9101 / MAFF 303099) (Mesorhizobium loti (strain MAFF 303099)).